The following is a 472-amino-acid chain: L-fuculokinase (472 aa).

It belongs to the FGGY kinase family. Requires a divalent metal cation as cofactor.

It carries out the reaction L-fuculose + ATP = L-fuculose 1-phosphate + ADP + H(+). Its pathway is carbohydrate degradation; L-fucose degradation; L-lactaldehyde and glycerone phosphate from L-fucose: step 2/3. In terms of biological role, catalyzes the phosphorylation of L-fuculose. The chain is L-fuculokinase from Salmonella typhi.